The following is a 362-amino-acid chain: Cobalt-precorrin-5B C(1)-methyltransferase (362 aa).

The protein belongs to the CbiD family.

It catalyses the reaction Co-precorrin-5B + S-adenosyl-L-methionine = Co-precorrin-6A + S-adenosyl-L-homocysteine. It participates in cofactor biosynthesis; adenosylcobalamin biosynthesis; cob(II)yrinate a,c-diamide from sirohydrochlorin (anaerobic route): step 6/10. Its function is as follows. Catalyzes the methylation of C-1 in cobalt-precorrin-5B to form cobalt-precorrin-6A. This Burkholderia ambifaria (strain MC40-6) protein is Cobalt-precorrin-5B C(1)-methyltransferase.